An 85-amino-acid polypeptide reads, in one-letter code: Large ribosomal subunit protein bL31B (85 aa).

This sequence belongs to the bacterial ribosomal protein bL31 family. Type B subfamily. In terms of assembly, part of the 50S ribosomal subunit.

The chain is Large ribosomal subunit protein bL31B from Serratia proteamaculans (strain 568).